We begin with the raw amino-acid sequence, 477 residues long: RTX-I toxin determinant D (477 aa).

The Cytoplasmic segment spans residues 1–59 (MKTWLMGLYEFFQAYKTVWTEIWKIRHQLDTPDREKDENEFLPAHLELIETPVSKKPRL). Residues 60-80 (IAYLIMLFLFLALVISIVSHV) form a helical membrane-spanning segment. Over 81-477 (EIVATATGKL…ESVSESLRER (397 aa)) the chain is Periplasmic.

The protein belongs to the membrane fusion protein (MFP) (TC 8.A.1) family.

The protein resides in the cell inner membrane. Involved in the transport of the toxin RTX-I as well as that of RTX-II. The sequence is that of RTX-I toxin determinant D (apxID) from Actinobacillus pleuropneumoniae (Haemophilus pleuropneumoniae).